We begin with the raw amino-acid sequence, 316 residues long: Melanocyte-stimulating hormone receptor (316 aa).

At 1-37 (MPMQGAHRKLLGSLNSTPTATSNLGLAANHTGAPCLE) the chain is on the extracellular side. A glycan (N-linked (GlcNAc...) asparagine) is linked at Asn29. A helical membrane pass occupies residues 38 to 63 (VSIPDGLFLSLGLVSLVENVLVVAAI). Residues 64-72 (AKNRNLHSS) are Cytoplasmic-facing. A helical transmembrane segment spans residues 73 to 93 (MYCFICCLALSDLLVSGSNML). The Extracellular portion of the chain corresponds to 94 to 118 (ETAVILLLEAGALATRTSVVQQLHN). The chain crosses the membrane as a helical span at residues 119 to 140 (TIDVLTCSSMLCSLCFLGAIAV). Residues 141 to 163 (DRYISIFYALRYHSIMTLPRAQR) lie on the Cytoplasmic side of the membrane. The helical transmembrane segment at 164-183 (AIAAIWVASVLSSTLFITYY) threads the bilayer. The Extracellular portion of the chain corresponds to 184 to 191 (DHAAVLLC). Residues 192–211 (LVVFFLAMLVLMAVLYVHML) traverse the membrane as a helical segment. The Cytoplasmic segment spans residues 212–240 (ARACQHAHGIIRLHKRQSPAHQGFGLRGA). A helical transmembrane segment spans residues 241 to 266 (ATLTILLGIFFLCWGPFFLHLTLVVF). The Extracellular portion of the chain corresponds to 267-279 (CPQHLTCSCIFKN). Residues 280–300 (FKVFLTLIICNTIIDPLIYAF) traverse the membrane as a helical segment. Residues 301-316 (RSQELRRTLKEVLCSW) are Cytoplasmic-facing. Cys314 is lipidated: S-palmitoyl cysteine.

Belongs to the G-protein coupled receptor 1 family. Interacts with MGRN1, but does not undergo MGRN1-mediated ubiquitination; this interaction competes with GNAS-binding and thus inhibits agonist-induced cAMP production. Interacts with OPN3; the interaction results in a decrease in MC1R-mediated cAMP signaling and ultimately a decrease in melanin production in melanocytes.

The protein localises to the cell membrane. Functionally, receptor for MSH (alpha, beta and gamma) and ACTH. The activity of this receptor is mediated by G proteins which activate adenylate cyclase. Mediates melanogenesis, the production of eumelanin (black/brown) and phaeomelanin (red/yellow), via regulation of cAMP signaling in melanocytes. The polypeptide is Melanocyte-stimulating hormone receptor (MC1R) (Leontocebus fuscicollis (Brown-mantled tamarin)).